Reading from the N-terminus, the 164-residue chain is Protein LIGHT-DEPENDENT SHORT HYPOCOTYLS 8 (164 aa).

Positions 23–150 (RYESQKSRDW…ARGVLYKKKK (128 aa)) constitute an ALOG domain. A Nuclear localization signal motif is present at residues 148 to 152 (KKKRL).

This sequence belongs to the plant homeotic and developmental regulators ALOG protein family.

The protein resides in the nucleus. Probable transcription regulator that acts as a developmental regulator by promoting cell growth in response to light. The sequence is that of Protein LIGHT-DEPENDENT SHORT HYPOCOTYLS 8 (LSH8) from Arabidopsis thaliana (Mouse-ear cress).